The following is a 223-amino-acid chain: Ribonuclease 3 (223 aa).

One can recognise an RNase III domain in the interval 4–127 (YSQLEKRLNY…IIGAVYLEAG (124 aa)). Glu40 provides a ligand contact to Mg(2+). Asp44 is an active-site residue. The Mg(2+) site is built by Asn113 and Glu116. Glu116 is an active-site residue. The 70-residue stretch at 154–223 (DYKTALQELT…AKIALEALKK (70 aa)) folds into the DRBM domain.

The protein belongs to the ribonuclease III family. Homodimer. Mg(2+) serves as cofactor.

Its subcellular location is the cytoplasm. The catalysed reaction is Endonucleolytic cleavage to 5'-phosphomonoester.. In terms of biological role, digests double-stranded RNA. Involved in the processing of primary rRNA transcript to yield the immediate precursors to the large and small rRNAs (23S and 16S). Processes some mRNAs, and tRNAs when they are encoded in the rRNA operon. Processes pre-crRNA and tracrRNA of type II CRISPR loci if present in the organism. The protein is Ribonuclease 3 of Sulfurovum sp. (strain NBC37-1).